The sequence spans 375 residues: Chaperone protein DnaJ (375 aa).

In terms of domain architecture, J spans 5 to 70 (DYYEVLGVER…SKRAAFDQYG (66 aa)). The CR-type zinc finger occupies 134 to 212 (GTTVSIRVPT…CHGEGRVEEY (79 aa)). Residues C147, C150, C164, C167, C186, C189, C200, and C203 each contribute to the Zn(2+) site. CXXCXGXG motif repeat units lie at residues 147-154 (CQPCDGSG), 164-171 (CPTCGGIG), 186-193 (CPRCHGQG), and 200-207 (CTSCHGEG).

Belongs to the DnaJ family. In terms of assembly, homodimer. Zn(2+) serves as cofactor.

The protein resides in the cytoplasm. Its function is as follows. Participates actively in the response to hyperosmotic and heat shock by preventing the aggregation of stress-denatured proteins and by disaggregating proteins, also in an autonomous, DnaK-independent fashion. Unfolded proteins bind initially to DnaJ; upon interaction with the DnaJ-bound protein, DnaK hydrolyzes its bound ATP, resulting in the formation of a stable complex. GrpE releases ADP from DnaK; ATP binding to DnaK triggers the release of the substrate protein, thus completing the reaction cycle. Several rounds of ATP-dependent interactions between DnaJ, DnaK and GrpE are required for fully efficient folding. Also involved, together with DnaK and GrpE, in the DNA replication of plasmids through activation of initiation proteins. This is Chaperone protein DnaJ from Pseudomonas putida (strain ATCC 47054 / DSM 6125 / CFBP 8728 / NCIMB 11950 / KT2440).